The following is a 152-amino-acid chain: Large ribosomal subunit protein bL9 (152 aa).

It belongs to the bacterial ribosomal protein bL9 family.

Functionally, binds to the 23S rRNA. The sequence is that of Large ribosomal subunit protein bL9 from Nocardia farcinica (strain IFM 10152).